Reading from the N-terminus, the 376-residue chain is cAMP-dependent protein kinase type I regulatory subunit (376 aa).

The tract at residues 1-131 (MSYMMAKTLE…ALSKAIAKNV (131 aa)) is dimerization and phosphorylation. The segment at 72-93 (PDDCEDLSPMPQTAAPPVRRRG) is disordered. The short motif at 91 to 95 (RRGGI) is the Pseudophosphorylation motif element. S96 bears the Phosphoserine mark. 3',5'-cyclic AMP is bound by residues 132–247 (LFAH…FLSR), E197, R206, 250–371 (ILES…YNSF), E321, and R330.

Belongs to the cAMP-dependent kinase regulatory chain family. As to quaternary structure, tetramer, composed of 2 regulatory (R) and 2 catalytic (C) subunits. In the presence of cAMP it dissociates into 2 active monomeric C subunits and an R dimer. Post-translationally, the pseudophosphorylation site binds to the substrate-binding region of the catalytic chain but is not phosphorylated. The physiological significance of phosphorylations by other kinases is unclear.

The chain is cAMP-dependent protein kinase type I regulatory subunit (Pka-R1) from Drosophila melanogaster (Fruit fly).